An 89-amino-acid polypeptide reads, in one-letter code: Small ribosomal subunit protein uS15 (89 aa).

It belongs to the universal ribosomal protein uS15 family. Part of the 30S ribosomal subunit. Forms a bridge to the 50S subunit in the 70S ribosome, contacting the 23S rRNA.

One of the primary rRNA binding proteins, it binds directly to 16S rRNA where it helps nucleate assembly of the platform of the 30S subunit by binding and bridging several RNA helices of the 16S rRNA. Its function is as follows. Forms an intersubunit bridge (bridge B4) with the 23S rRNA of the 50S subunit in the ribosome. The polypeptide is Small ribosomal subunit protein uS15 (Ligilactobacillus salivarius (strain UCC118) (Lactobacillus salivarius)).